An 837-amino-acid chain; its full sequence is Dapper homolog 2 (837 aa).

Positions 65-113 (ENVSKEELRLEATLSLLKQQLTRLRRQDVGLKTHLQQLDQQITELKLDV) form a coiled coil. Disordered regions lie at residues 189–265 (ADES…PKYQ), 424–497 (HGKH…DKSS), 512–564 (GSQR…KQSG), 600–649 (QQIP…HTQR), and 738–782 (EMSD…EDEG). 2 stretches are compositionally biased toward polar residues: residues 246 to 265 (VKSSTPCSSPQNPSVDPKYQ) and 432 to 445 (LDLQKNNFPINNTA). 3 stretches are compositionally biased toward basic and acidic residues: residues 456–466 (ASEKRSGHFPK), 486–496 (EGSRASCHDKS), and 548–560 (LSREFCTKNRTDL). The span at 741-759 (DYTTNRFGDSESSQGSQTA) shows a compositional bias: polar residues. Acidic residues predominate over residues 768-782 (LDEEDLLEEEEEDEG). The PDZ-binding signature appears at 834–837 (MTLV).

This sequence belongs to the dapper family. Interacts with dvl2.

Its subcellular location is the cytoplasm. The protein resides in the late endosome. The protein localises to the nucleus. It localises to the cell membrane. Its function is as follows. Involved in regulation of intracellular signaling pathways during development. Specifically thought to play a role in canonical and/or non-canonical Wnt signaling pathways through interaction with DSH (Dishevelled) family proteins. Positive regulator of the Wnt signaling pathway which acts downstream of wnt1 indicative for non-canonical Wnt signaling. Also negatively regulates the Nodal signaling pathway, possibly by promoting the lysosomal degradation of Nodal receptors. Required for convergent extension movements in gastrulation. In Danio rerio (Zebrafish), this protein is Dapper homolog 2 (dact2).